A 736-amino-acid chain; its full sequence is Catalase-1 (736 aa).

The segment at 1–29 (MSNIISQAGQKAKEALTSAPSSKKVDDLK) is disordered. Residue Arg89 coordinates heme. The active site involves His92. Arg129 is a binding site for heme. Asn165 is a catalytic residue. Positions 178, 375, 379, and 386 each coordinate heme. Residues 356 to 379 (CTSHVVNGIGFSDDPLLQGRNFSY) constitute a cross-link (3-(S-cysteinyl)-tyrosine (Cys-Tyr)).

The protein belongs to the catalase family. In terms of assembly, homotetramer. The cofactor is heme. Glycosylated; with alpha-glucose and/or alpha-mannose.

It localises to the secreted. Its subcellular location is the cell wall. It catalyses the reaction 2 H2O2 = O2 + 2 H2O. In terms of biological role, occurs in almost all aerobically respiring organisms and serves to protect cells from the toxic effects of hydrogen peroxide. This Neurospora crassa (strain ATCC 24698 / 74-OR23-1A / CBS 708.71 / DSM 1257 / FGSC 987) protein is Catalase-1 (cat-1).